A 108-amino-acid chain; its full sequence is Pyrimidine/purine nucleoside phosphorylase (108 aa).

Belongs to the nucleoside phosphorylase PpnP family.

It carries out the reaction a purine D-ribonucleoside + phosphate = a purine nucleobase + alpha-D-ribose 1-phosphate. The enzyme catalyses adenosine + phosphate = alpha-D-ribose 1-phosphate + adenine. The catalysed reaction is cytidine + phosphate = cytosine + alpha-D-ribose 1-phosphate. It catalyses the reaction guanosine + phosphate = alpha-D-ribose 1-phosphate + guanine. It carries out the reaction inosine + phosphate = alpha-D-ribose 1-phosphate + hypoxanthine. The enzyme catalyses thymidine + phosphate = 2-deoxy-alpha-D-ribose 1-phosphate + thymine. The catalysed reaction is uridine + phosphate = alpha-D-ribose 1-phosphate + uracil. It catalyses the reaction xanthosine + phosphate = alpha-D-ribose 1-phosphate + xanthine. Catalyzes the phosphorolysis of diverse nucleosides, yielding D-ribose 1-phosphate and the respective free bases. Can use uridine, adenosine, guanosine, cytidine, thymidine, inosine and xanthosine as substrates. Also catalyzes the reverse reactions. The polypeptide is Pyrimidine/purine nucleoside phosphorylase (Acinetobacter baumannii (strain AB307-0294)).